We begin with the raw amino-acid sequence, 201 residues long: Nascent polypeptide-associated complex subunit alpha (201 aa).

Basic and acidic residues predominate over residues 1–20; that stretch reads MANPRVEELPDEEVKKTVVD. 2 disordered regions span residues 1 to 51 and 118 to 165; these read MANP…SRNE and AQQL…IEDK. The span at 21-36 shows a compositional bias: acidic residues; sequence DHDDDSSSDSDGEEET. Positions 48-113 constitute an NAC-A/B domain; the sequence is SRNEKKARKA…AKIEDLNASA (66 aa). The segment covering 126 to 149 has biased composition (basic and acidic residues); sequence GHDHDHAGHSHGEAKASEGDAKKE. The span at 150 to 161 shows a compositional bias: acidic residues; it reads EEDDDEEVDADG. Positions 162-200 constitute a UBA domain; the sequence is IEDKDIELVMTQAGVSRTKAIKALKENDNDIVNSIMALS.

Belongs to the NAC-alpha family. As to quaternary structure, part of the nascent polypeptide-associated complex (NAC), consisting of EGD2 and EGD1. NAC associates with ribosomes via EGD1.

The protein localises to the cytoplasm. It localises to the nucleus. Component of the nascent polypeptide-associated complex (NAC), a dynamic component of the ribosomal exit tunnel, protecting the emerging polypeptides from interaction with other cytoplasmic proteins to ensure appropriate nascent protein targeting. The NAC complex also promotes mitochondrial protein import by enhancing productive ribosome interactions with the outer mitochondrial membrane and blocks the inappropriate interaction of ribosomes translating non-secretory nascent polypeptides with translocation sites in the membrane of the endoplasmic reticulum. EGD2 may also be involved in transcription regulation. In Pyricularia oryzae (strain 70-15 / ATCC MYA-4617 / FGSC 8958) (Rice blast fungus), this protein is Nascent polypeptide-associated complex subunit alpha (EGD2).